The primary structure comprises 156 residues: Small ribosomal subunit protein uS7 (156 aa).

It belongs to the universal ribosomal protein uS7 family. Part of the 30S ribosomal subunit. Contacts proteins S9 and S11.

Functionally, one of the primary rRNA binding proteins, it binds directly to 16S rRNA where it nucleates assembly of the head domain of the 30S subunit. Is located at the subunit interface close to the decoding center, probably blocks exit of the E-site tRNA. This is Small ribosomal subunit protein uS7 from Rhodococcus opacus (strain B4).